Consider the following 683-residue polypeptide: Acetyl-coenzyme A synthetase 2 (683 aa).

CoA is bound by residues 207–210 (RGGK) and threonine 326. ATP is bound by residues 402-404 (GEP), 426-431 (DTFWQT), aspartate 517, and arginine 532. Serine 540 provides a ligand contact to CoA. Arginine 543 contributes to the ATP binding site. A CoA-binding site is contributed by arginine 613.

The protein belongs to the ATP-dependent AMP-binding enzyme family.

It catalyses the reaction acetate + ATP + CoA = acetyl-CoA + AMP + diphosphate. This is Acetyl-coenzyme A synthetase 2 (ACS2) from Candida glabrata (strain ATCC 2001 / BCRC 20586 / JCM 3761 / NBRC 0622 / NRRL Y-65 / CBS 138) (Yeast).